The following is a 322-amino-acid chain: Quinolinate synthase (322 aa).

His-37 and Ser-54 together coordinate iminosuccinate. Residue Cys-99 coordinates [4Fe-4S] cluster. Residues 125-127 and Ser-142 each bind iminosuccinate; that span reads YIN. Cys-185 is a [4Fe-4S] cluster binding site. Residues 211–213 and Thr-228 contribute to the iminosuccinate site; that span reads HPE. Residue Cys-278 coordinates [4Fe-4S] cluster.

It belongs to the quinolinate synthase family. Type 2 subfamily. [4Fe-4S] cluster is required as a cofactor.

Its subcellular location is the cytoplasm. It catalyses the reaction iminosuccinate + dihydroxyacetone phosphate = quinolinate + phosphate + 2 H2O + H(+). It participates in cofactor biosynthesis; NAD(+) biosynthesis; quinolinate from iminoaspartate: step 1/1. In terms of biological role, catalyzes the condensation of iminoaspartate with dihydroxyacetone phosphate to form quinolinate. This Prosthecochloris aestuarii (strain DSM 271 / SK 413) protein is Quinolinate synthase.